The chain runs to 394 residues: Protein TsgA homolog (394 aa).

12 helical membrane passes run 11 to 31 (WISY…GMVM), 51 to 71 (FLNA…EIIP), 76 to 96 (LVFG…GHNL), 101 to 121 (ISMF…TFLI), 134 to 154 (LLFT…AAAI), 162 to 182 (WYWV…LTLC), 206 to 226 (MGVL…LGFI), 246 to 266 (QLVS…SFIL), 274 to 294 (IVTV…STNN), 302 to 322 (ILAL…LGSL), 334 to 354 (FILT…GPIV), and 363 to 383 (LATA…LGFF).

The protein belongs to the major facilitator superfamily. TsgA family.

It is found in the cell inner membrane. The protein is Protein TsgA homolog of Yersinia enterocolitica serotype O:8 / biotype 1B (strain NCTC 13174 / 8081).